Here is a 359-residue protein sequence, read N- to C-terminus: MMLILIAVGIALAVSILLTPALIRLFTKQGLGHEIREDGPPSHAKKRGTPSMGGVAILAGIWAGYLGSHLVGMAMGGDGPSASGLLVLGLATVLGGVGFIDDMIKLKRARNLGLNKTAKTVGQLFAAVLFGVLALQFRNGDGLTPGSAELSYVREIATVTLAPALFVLFCVVVVSAWSNAVNFTDGLDGLAAGAMAMVTAAYVLITFWQYRNACATAPGLGCYNVRDPLDLALVAAATAGACVGFLWWNAAPAKIFMGDTGSLALGGIIAGISVTSRTEILAVVLGALFVAEVTSVVVQILAFRTTGRRVFRMAPFHHHFELVGWAETQVIIRFWLLTAIACGLGVALFYGEWLTAVGA.

10 helical membrane-spanning segments follow: residues 3 to 23 (LILI…PALI), 55 to 75 (VAIL…GMAM), 80 to 100 (PSAS…VGFI), 117 to 137 (TAKT…ALQF), 156 to 176 (IATV…VVSA), 187 to 207 (LDGL…LITF), 231 to 251 (LALV…WNAA), 255 to 275 (IFMG…ISVT), 280 to 300 (ILAV…VVQI), and 334 to 354 (FWLL…GEWL).

Belongs to the glycosyltransferase 4 family. MraY subfamily. Mg(2+) is required as a cofactor.

The protein localises to the cell membrane. The catalysed reaction is UDP-N-acetyl-alpha-D-muramoyl-L-alanyl-gamma-D-glutamyl-meso-2,6-diaminopimeloyl-D-alanyl-D-alanine + di-trans,octa-cis-undecaprenyl phosphate = di-trans,octa-cis-undecaprenyl diphospho-N-acetyl-alpha-D-muramoyl-L-alanyl-D-glutamyl-meso-2,6-diaminopimeloyl-D-alanyl-D-alanine + UMP. It participates in cell wall biogenesis; peptidoglycan biosynthesis. In terms of biological role, catalyzes the initial step of the lipid cycle reactions in the biosynthesis of the cell wall peptidoglycan: transfers peptidoglycan precursor phospho-MurNAc-pentapeptide from UDP-MurNAc-pentapeptide onto the lipid carrier undecaprenyl phosphate, yielding undecaprenyl-pyrophosphoryl-MurNAc-pentapeptide, known as lipid I. This is Phospho-N-acetylmuramoyl-pentapeptide-transferase from Mycolicibacterium smegmatis (strain ATCC 700084 / mc(2)155) (Mycobacterium smegmatis).